Reading from the N-terminus, the 502-residue chain is Protein YdgA (502 aa).

The N-terminal stretch at 1–19 (MNKSLVAVGVIVALGVVWT) is a signal peptide.

The protein to E.coli YihF and H.influenzae HI_1236. As to quaternary structure, homodimer.

Its subcellular location is the cell inner membrane. The chain is Protein YdgA (ydgA) from Escherichia coli (strain K12).